The sequence spans 270 residues: S-methyl-5'-thioadenosine phosphorylase (270 aa).

Phosphate is bound by residues S16, 58–59 (RH), and 91–92 (SA). 3 disulfide bridges follow: C138-C205, C200-C262, and C259-C261. M190 contributes to the substrate binding site. T191 contributes to the phosphate binding site. Substrate is bound at residue 214 to 216 (DYD).

It belongs to the PNP/MTAP phosphorylase family. MTAP subfamily. Homohexamer. Dimer of a homotrimer.

The catalysed reaction is S-methyl-5'-thioadenosine + phosphate = 5-(methylsulfanyl)-alpha-D-ribose 1-phosphate + adenine. It participates in amino-acid biosynthesis; L-methionine biosynthesis via salvage pathway; S-methyl-5-thio-alpha-D-ribose 1-phosphate from S-methyl-5'-thioadenosine (phosphorylase route): step 1/1. Catalyzes the reversible phosphorylation of S-methyl-5'-thioadenosine (MTA) to adenine and 5-methylthioribose-1-phosphate. Involved in the breakdown of MTA, a major by-product of polyamine biosynthesis. Responsible for the first step in the methionine salvage pathway after MTA has been generated from S-adenosylmethionine. Has broad substrate specificity with 6-aminopurine nucleosides as preferred substrates. In Saccharolobus solfataricus (strain ATCC 35092 / DSM 1617 / JCM 11322 / P2) (Sulfolobus solfataricus), this protein is S-methyl-5'-thioadenosine phosphorylase.